The primary structure comprises 78 residues: Large ribosomal subunit protein bL28 (78 aa).

The tract at residues 1–20 (MSRVCQVTGKRPAVGNNRSH) is disordered.

This sequence belongs to the bacterial ribosomal protein bL28 family.

The polypeptide is Large ribosomal subunit protein bL28 (Actinobacillus succinogenes (strain ATCC 55618 / DSM 22257 / CCUG 43843 / 130Z)).